Here is a 1502-residue protein sequence, read N- to C-terminus: Leucine-rich repeat-containing protein 9 (1502 aa).

LRR repeat units follow at residues 53–79 (FPNLTQLILVGQNIHCIAGLESCHFLK), 97–119 (CADLQKLYLYHNEISVIEGLENL), 120–141 (LKLEVLWLNNNQINVIEGLDMM), 142–164 (QNLKELNLANNLIHSIGESLDPN), 166–188 (QLERLNLSGNKISSFKELTNLAR), 224–247 (LQRLDTYDVSEKQIKNLAESTVVK), 296–320 (EHELTDMKSSGNMQANIPISNKFHE), 699–721 (YSQITVLNLHGNSLSKLKDISRL), 722–744 (NGLRKLIISFNEFSSLEDVSYLT), 746–764 (LEYLDASHNQVITLEGFKG), 765–790 (LGKLKYLDLSWNKLTNSREDLHILRK), 792–814 (AIQLSSLDIRYNFWQKPASVLKD), 822–849 (LTHLNGVTITEDEISEALQISSGSRITQ), 894–916 (YTKITSLTLDSQNLVRITNLEKL), 917–938 (VNLRWASFSSNHLTKIEGLEHC), 939–960 (VNLEELNLDDNSISKLEGLSKL), 961–983 (TKLRRLSINNNLLAGFDRHVIES), 985–1009 (SHLHFLSAENNNISSLAGLQRGYKL), 1011–1030 (ELYLSNNCISSNQEIYSLKG), 1031–1053 (LNNLVILDMWGNPILLKHENYRL), 1100–1123 (FTELQDLNWRTSSIRSIDLVPADH), 1124–1146 (FRNVQTVNLENNNLTSFSGLIFL), 1147–1170 (PNIKNLYLNHNRIESILPQQKSQS), 1209–1232 (MQSLEVLHLGYNGINSLPMLQLGR), 1234–1255 (RNLKSLYLQGNEISHVEGLENL), 1256–1278 (QFLRELVLDHNRIKAIAETSFAK), 1280–1301 (NSLVSLNLEENRLRDLNNLPPL), 1302–1325 (LKLRKLLIGSNKIQEISEIEKLEV), and 1327–1351 (PALVELSISGNPISRKPFLRNLLVV). The segment at 317–342 (KFHENNCDTEESNSQQSSERRKNNSD) is disordered. A compositionally biased stretch (polar residues) spans 1479–1496 (TQQSGQARSQQKHPFNQE). A disordered region spans residues 1479–1502 (TQQSGQARSQQKHPFNQENEGRCV).

In Xenopus tropicalis (Western clawed frog), this protein is Leucine-rich repeat-containing protein 9 (lrrc9).